The sequence spans 339 residues: MFYKIAQKFMFQMDPELAHNFAIGSLKSTGNSPLNCFYAQKIKPAPVTMMGLTFPNPVGLAAGMDKDGECIDAFHAMGFGHVEVGTVTPRPQPGNEQPRLFRLKPAKAIINRMGFNNKGVDSLVENLKAVKSDAMVGVNIGKNKDTPVELGKDDYLICMDKVYQYAAYIAVNISSPNTPGLRSLQYGDLLDDLLGSLKQKQKDLTEKHGKYVPIALKIAPDLSSEEIEKIADSLIRNEFDAAIATNTTLTRDGVSGLLNANEAGGLSGKPLNSLSTIVIKQLADCLKGQIPIIGVGGINTAADALDKIDAGAQMVQIYSGFIYQGPQLIKDIIEAYRIK.

FMN is bound by residues 62–66 (AGMDK) and T86. K66 is a substrate binding site. 111–115 (NRMGF) contacts substrate. The FMN site is built by N139 and N172. Position 172 (N172) interacts with substrate. The active-site Nucleophile is the S175. N177 lines the substrate pocket. Residues K217 and T245 each coordinate FMN. 246 to 247 (NT) serves as a coordination point for substrate. FMN contacts are provided by residues G268, G297, and 318–319 (YS).

It belongs to the dihydroorotate dehydrogenase family. Type 2 subfamily. As to quaternary structure, monomer. The cofactor is FMN.

The protein resides in the cell membrane. The enzyme catalyses (S)-dihydroorotate + a quinone = orotate + a quinol. Its pathway is pyrimidine metabolism; UMP biosynthesis via de novo pathway; orotate from (S)-dihydroorotate (quinone route): step 1/1. Its function is as follows. Catalyzes the conversion of dihydroorotate to orotate with quinone as electron acceptor. This chain is Dihydroorotate dehydrogenase (quinone), found in Shewanella piezotolerans (strain WP3 / JCM 13877).